The following is a 195-amino-acid chain: 3-isopropylmalate dehydratase small subunit (195 aa).

The protein belongs to the LeuD family. LeuD type 1 subfamily. Heterodimer of LeuC and LeuD.

It carries out the reaction (2R,3S)-3-isopropylmalate = (2S)-2-isopropylmalate. It participates in amino-acid biosynthesis; L-leucine biosynthesis; L-leucine from 3-methyl-2-oxobutanoate: step 2/4. In terms of biological role, catalyzes the isomerization between 2-isopropylmalate and 3-isopropylmalate, via the formation of 2-isopropylmaleate. This Frankia casuarinae (strain DSM 45818 / CECT 9043 / HFP020203 / CcI3) protein is 3-isopropylmalate dehydratase small subunit.